The following is a 406-amino-acid chain: Argininosuccinate synthase (406 aa).

8-16 (AYSGGLDTS) lines the ATP pocket. Tyr-86 is an L-citrulline binding site. Gly-116 contacts ATP. L-aspartate is bound by residues Thr-118, Asn-122, and Asp-123. An L-citrulline-binding site is contributed by Asn-122. L-citrulline contacts are provided by Arg-126, Ser-174, Ser-183, Glu-259, and Tyr-271.

Belongs to the argininosuccinate synthase family. Type 1 subfamily. Homotetramer.

It is found in the cytoplasm. It catalyses the reaction L-citrulline + L-aspartate + ATP = 2-(N(omega)-L-arginino)succinate + AMP + diphosphate + H(+). It functions in the pathway amino-acid biosynthesis; L-arginine biosynthesis; L-arginine from L-ornithine and carbamoyl phosphate: step 2/3. The sequence is that of Argininosuccinate synthase from Oenococcus oeni (strain ATCC BAA-331 / PSU-1).